Reading from the N-terminus, the 27-residue chain is GFGSLLGKALKAGLKLGANLLGGAPQQ.

As to expression, expressed by the skin glands.

It is found in the secreted. Antimicrobial peptide. The protein is Caerulein precursor fragment R2 of Xenopus ruwenzoriensis (Uganda clawed frog).